Here is a 360-residue protein sequence, read N- to C-terminus: NADP-dependent alcohol dehydrogenase 6 (360 aa).

Cysteine 46 lines the Zn(2+) pocket. Residues glycine 47 and histidine 51 each coordinate NADP(+). Positions 68, 100, 103, 106, and 114 each coordinate Zn(2+). The residue at position 131 (serine 131) is a Phosphoserine. Zn(2+) is bound at residue cysteine 163. Leucine 188, glycine 190, isoleucine 191, serine 210, arginine 211, lysine 215, cysteine 250, serine 252, threonine 255, aspartate 256, isoleucine 275, isoleucine 277, tyrosine 298, serine 299, leucine 301, and arginine 348 together coordinate NADP(+). Serine 359 carries the post-translational modification Phosphoserine.

This sequence belongs to the zinc-containing alcohol dehydrogenase family. In terms of assembly, homodimer. It depends on Zn(2+) as a cofactor.

It localises to the cytoplasm. It is found in the nucleus. It carries out the reaction a primary alcohol + NADP(+) = an aldehyde + NADPH + H(+). The catalysed reaction is (E)-cinnamyl alcohol + NADP(+) = (E)-cinnamaldehyde + NADPH + H(+). It catalyses the reaction hexan-1-ol + NADP(+) = hexanal + NADPH + H(+). The enzyme catalyses 3-methylbutanol + NADP(+) = 3-methylbutanal + NADPH + H(+). It carries out the reaction S-nitroso-CoA + NADPH + H(+) = sulfinamide-CoA + NADP(+). Functionally, NADP-dependent, medium-chain alcohol dehydrogenase with a broad substrate specificity. Aldehydes exhibited 50-12000 times higher catalytic efficiency than the corresponding alcohols, therefore the major function of the enzyme is as an aldehyde reductase. The enzyme is active towards aromatic and aliphatic (linear and branched-chain) aldehydes. The enzyme is very active towards aromatic aldehydes, such as cinnamaldehyde, benzaldehyde and substituted benzaldehydes, such as veratraldehyde and panisaldehyde. It exhibits low activity towards substituted cinnamaldehydes, such as coniferaldehyde and sinapaldehyde. The enzyme has no activity with ketones, such as acetone or cyclohexanone. For the reverse reaction, linear and branched-chain primary alcohols are substrates, whereas very low activity is found with secondary alcohols, such as butan-2-ol. The enzyme may be physiologically involved in several steps of the lignin degradation pathway, initiated by other microorganisms, in the synthesis of fusel alcohols, products derived from the aminoacidic metabolism, and in the homeostasis of NADP(H). Has the ability to reduce 5-hydroxymethyl furfural (HMF), a furan derivative which is formed during the hydrolysis of lignocellulosic materials, to 5-hydroxymethylfurfuryl alcohol, thereby alleviating the inhibition of the fermentation of lignocellulose hydrolysates by HMF during fuel ethanol production. Also acts as an inhibitor of protein S-nitrosylation by mediating degradation of S-nitroso-coenzyme A (S-nitroso-CoA), a cofactor required to S-nitrosylate proteins. The polypeptide is NADP-dependent alcohol dehydrogenase 6 (Saccharomyces cerevisiae (strain ATCC 204508 / S288c) (Baker's yeast)).